A 121-amino-acid polypeptide reads, in one-letter code: UPF0344 protein BCE_1257 (121 aa).

Helical transmembrane passes span 6 to 26 (ITAWALGLILFFVAYSLYSAG), 38 to 58 (LMYIFIIVTGFMLYMSIVKTA), 65 to 85 (WYGLKMLAGILVIGGMEMVLV), and 92 to 112 (PTGAVWGLFIVALVAVIYLGL).

The protein belongs to the UPF0344 family.

It localises to the cell membrane. The chain is UPF0344 protein BCE_1257 from Bacillus cereus (strain ATCC 10987 / NRS 248).